A 317-amino-acid chain; its full sequence is 4-hydroxy-3-methylbut-2-enyl diphosphate reductase (317 aa).

A [4Fe-4S] cluster-binding site is contributed by Cys12. (2E)-4-hydroxy-3-methylbut-2-enyl diphosphate contacts are provided by His41 and His74. Dimethylallyl diphosphate contacts are provided by His41 and His74. 2 residues coordinate isopentenyl diphosphate: His41 and His74. Cys97 lines the [4Fe-4S] cluster pocket. His125 provides a ligand contact to (2E)-4-hydroxy-3-methylbut-2-enyl diphosphate. His125 serves as a coordination point for dimethylallyl diphosphate. Position 125 (His125) interacts with isopentenyl diphosphate. Residue Glu127 is the Proton donor of the active site. Thr168 contributes to the (2E)-4-hydroxy-3-methylbut-2-enyl diphosphate binding site. Cys198 provides a ligand contact to [4Fe-4S] cluster. Positions 226, 227, 228, and 270 each coordinate (2E)-4-hydroxy-3-methylbut-2-enyl diphosphate. Dimethylallyl diphosphate-binding residues include Ser226, Ser227, Asn228, and Ser270. 4 residues coordinate isopentenyl diphosphate: Ser226, Ser227, Asn228, and Ser270.

Belongs to the IspH family. As to quaternary structure, homodimer. [4Fe-4S] cluster is required as a cofactor.

The enzyme catalyses isopentenyl diphosphate + 2 oxidized [2Fe-2S]-[ferredoxin] + H2O = (2E)-4-hydroxy-3-methylbut-2-enyl diphosphate + 2 reduced [2Fe-2S]-[ferredoxin] + 2 H(+). It catalyses the reaction dimethylallyl diphosphate + 2 oxidized [2Fe-2S]-[ferredoxin] + H2O = (2E)-4-hydroxy-3-methylbut-2-enyl diphosphate + 2 reduced [2Fe-2S]-[ferredoxin] + 2 H(+). The protein operates within isoprenoid biosynthesis; dimethylallyl diphosphate biosynthesis; dimethylallyl diphosphate from (2E)-4-hydroxy-3-methylbutenyl diphosphate: step 1/1. It functions in the pathway isoprenoid biosynthesis; isopentenyl diphosphate biosynthesis via DXP pathway; isopentenyl diphosphate from 1-deoxy-D-xylulose 5-phosphate: step 6/6. In terms of biological role, catalyzes the conversion of 1-hydroxy-2-methyl-2-(E)-butenyl 4-diphosphate (HMBPP) into a mixture of isopentenyl diphosphate (IPP) and dimethylallyl diphosphate (DMAPP). Acts in the terminal step of the DOXP/MEP pathway for isoprenoid precursor biosynthesis. This Yersinia pestis bv. Antiqua (strain Antiqua) protein is 4-hydroxy-3-methylbut-2-enyl diphosphate reductase.